A 90-amino-acid chain; its full sequence is RNA-binding protein Hfq (90 aa).

Residues 11 to 71 enclose the Sm domain; sequence DVFLNSVRKT…ISTIMPAAPV (61 aa).

This sequence belongs to the Hfq family. As to quaternary structure, homohexamer.

Functionally, RNA chaperone that binds small regulatory RNA (sRNAs) and mRNAs to facilitate mRNA translational regulation in response to envelope stress, environmental stress and changes in metabolite concentrations. Also binds with high specificity to tRNAs. The protein is RNA-binding protein Hfq of Maricaulis maris (strain MCS10) (Caulobacter maris).